We begin with the raw amino-acid sequence, 144 residues long: UPF0102 protein BTH_I3148 (144 aa).

The disordered stretch occupies residues 1 to 20 (MCHARAARQATGEAEAAPRD).

Belongs to the UPF0102 family.

This chain is UPF0102 protein BTH_I3148, found in Burkholderia thailandensis (strain ATCC 700388 / DSM 13276 / CCUG 48851 / CIP 106301 / E264).